The following is a 224-amino-acid chain: dTDP-fucosamine acetyltransferase (224 aa).

The N-acetyltransferase domain maps to 94–224 (PALRQLASAA…VESTAYWLYR (131 aa)). Residues 168 to 174 (LAGRGAG), N201, and R207 contribute to the acetyl-CoA site. The active-site Proton donor is the Y208.

The protein belongs to the WecD family. As to quaternary structure, homodimer.

The catalysed reaction is dTDP-4-amino-4,6-dideoxy-alpha-D-galactose + acetyl-CoA = dTDP-4-acetamido-4,6-dideoxy-alpha-D-galactose + CoA + H(+). The protein operates within bacterial outer membrane biogenesis; enterobacterial common antigen biosynthesis. Its function is as follows. Catalyzes the acetylation of dTDP-fucosamine (dTDP-4-amino-4,6-dideoxy-D-galactose) to dTDP-Fuc4NAc, which is utilized in the biosynthesis of the enterobacterial common antigen (ECA). The polypeptide is dTDP-fucosamine acetyltransferase (Escherichia coli O6:H1 (strain CFT073 / ATCC 700928 / UPEC)).